A 947-amino-acid polypeptide reads, in one-letter code: Protocadherin alpha-4 (947 aa).

An N-terminal signal peptide occupies residues 1 to 29 (MEFSWGSGQESQRLLLSFLLLAIWEAGNS). 6 Cadherin domains span residues 30–133 (QIHY…PPRF), 134–242 (PTTQ…APVF), 243–350 (DRSL…VPEL), 351–455 (EFKS…APVF), 456–565 (AQPE…APTL), and 573–681 (SGGI…APSR). At 30–697 (QIHYSIPEEA…HSEASLVDVN (668 aa)) the chain is on the extracellular side. A disulfide bridge connects residues cysteine 96 and cysteine 102. N-linked (GlcNAc...) asparagine glycans are attached at residues asparagine 257 and asparagine 265. The O-linked (Man) threonine glycan is linked to threonine 438. 2 O-linked (Man) serine glycosylation sites follow: serine 440 and serine 442. The N-linked (GlcNAc...) asparagine glycan is linked to asparagine 548. Residues 698 to 718 (VYLIIAICAVSSLLVLTLLLY) traverse the membrane as a helical segment. The Cytoplasmic portion of the chain corresponds to 719 to 947 (TALRCSTVPS…GNSTTDNSDQ (229 aa)). PXXP repeat units lie at residues 734-737 (PPKP), 774-777 (PSLS), 796-799 (PRQP), 829-832 (PGGP), 870-873 (PGNP), and 888-891 (PGSP). A 6 X 4 AA repeats of P-X-X-P region spans residues 734 to 891 (PPKPVMVCSS…PDKFIIPGSP (158 aa)). The required for interaction with FYN stretch occupies residues 738–947 (VMVCSSAVGS…GNSTTDNSDQ (210 aa)). Disordered regions lie at residues 761–805 (GEYP…DWRY) and 824–853 (ILRA…EVSP). A disordered region spans residues 891–947 (PAIISIRQEPANNQIDKSDFITFGKKEETKKKKKKKKGNKTQEKKEKGNSTTDNSDQ). Residues 906–920 (DKSDFITFGKKEETK) are compositionally biased toward basic and acidic residues.

In terms of assembly, forms homodimers in trans (molecules expressed by two different cells). Forms promiscuous heterodimers in cis (at the plasma membrane of the same cell) with other protocadherins. Interacts with FYN. Detected in brain throughout embryonic development. Detected in adult brain, in particular in cerebellum and forebrain.

The protein resides in the cell membrane. In terms of biological role, calcium-dependent cell-adhesion protein involved in cells self-recognition and non-self discrimination. Thereby, it is involved in the establishment and maintenance of specific neuronal connections in the brain. The sequence is that of Protocadherin alpha-4 from Mus musculus (Mouse).